We begin with the raw amino-acid sequence, 455 residues long: Elongation factor Tu, mitochondrial (455 aa).

Residues 1-46 constitute a mitochondrion transit peptide; it reads MTTMAAATLLRATPHFSGLAAGRTFLLQGLLRLLKAPALPLLCRGL. The 197-residue stretch at 58–254 folds into the tr-type G domain; the sequence is KPHVNVGTIG…AVDTYIPVPA (197 aa). The interval 67-74 is G1; it reads GHVDHGKT. Aspartate 70, glycine 72, lysine 73, threonine 74, and threonine 75 together coordinate GTP. Threonine 74 contributes to the Mg(2+) binding site. Position 82 is an N6-acetyllysine (lysine 82). Residue lysine 91 is modified to N6-acetyllysine; alternate. At lysine 91 the chain carries N6-succinyllysine; alternate. Residues 108–112 are G2; that stretch reads GITIN. The segment at 129-132 is G3; it reads DCPG. Residues asparagine 184, aspartate 187, serine 222, alanine 223, and leucine 224 each coordinate GTP. Residues 184–187 are G4; the sequence is NKAD. The tract at residues 222–224 is G5; it reads SAL. Lysine 237 is subject to N6-succinyllysine. Lysine 259 bears the N6-acetyllysine mark. Residue threonine 281 is modified to Phosphothreonine. Residue lysine 289 is modified to N6-succinyllysine. At serine 315 the chain carries Phosphoserine. N6-acetyllysine occurs at positions 364 and 421.

This sequence belongs to the TRAFAC class translation factor GTPase superfamily. Classic translation factor GTPase family. EF-Tu/EF-1A subfamily. In terms of assembly, interacts with NLRX1. Interacts with ATG16L1. As to quaternary structure, (Microbial infection) Interacts with human parainfluenza virus 3 matrix protein; this interaction inhibits RLR-mediated type I interferon production while promoting autophagy. (Microbial infection) Interacts with Hantaan hantavirus glycoprotein N; this interaction contributes to the virus-induced degradation of mitochondria by autophagy, which leads to degradation of MAVS and inhibition of type I interferon (IFN) responses.

It localises to the mitochondrion. The catalysed reaction is GTP + H2O = GDP + phosphate + H(+). Functionally, GTP hydrolase that promotes the GTP-dependent binding of aminoacyl-tRNA to the A-site of ribosomes during protein biosynthesis. Also plays a role in the regulation of autophagy and innate immunity. Recruits ATG5-ATG12 and NLRX1 at mitochondria and serves as a checkpoint of the RIGI-MAVS pathway. In turn, inhibits RLR-mediated type I interferon while promoting autophagy. This Homo sapiens (Human) protein is Elongation factor Tu, mitochondrial (TUFM).